The following is a 129-amino-acid chain: Glycine cleavage system H protein (129 aa).

One can recognise a Lipoyl-binding domain in the interval threonine 24 to lysine 106. Lysine 65 carries the N6-lipoyllysine modification.

The protein belongs to the GcvH family. The glycine cleavage system is composed of four proteins: P, T, L and H. Requires (R)-lipoate as cofactor.

Its function is as follows. The glycine cleavage system catalyzes the degradation of glycine. The H protein shuttles the methylamine group of glycine from the P protein to the T protein. This Salmonella choleraesuis (strain SC-B67) protein is Glycine cleavage system H protein.